A 506-amino-acid chain; its full sequence is Maturase K (506 aa).

The protein belongs to the intron maturase 2 family. MatK subfamily.

It is found in the plastid. Its subcellular location is the chloroplast. Functionally, usually encoded in the trnK tRNA gene intron. Probably assists in splicing its own and other chloroplast group II introns. The chain is Maturase K from Trifolium spumosum (Mediterranean clover).